Consider the following 315-residue polypeptide: ATP synthase gamma chain (315 aa).

It belongs to the ATPase gamma chain family. F-type ATPases have 2 components, CF(1) - the catalytic core - and CF(0) - the membrane proton channel. CF(1) has five subunits: alpha(3), beta(3), gamma(1), delta(1), epsilon(1). CF(0) has three main subunits: a, b and c.

It is found in the cellular thylakoid membrane. In terms of biological role, produces ATP from ADP in the presence of a proton gradient across the membrane. The gamma chain is believed to be important in regulating ATPase activity and the flow of protons through the CF(0) complex. This is ATP synthase gamma chain from Microcystis aeruginosa (strain NIES-843 / IAM M-2473).